A 242-amino-acid polypeptide reads, in one-letter code: Outer membrane protein class 4 (242 aa).

Positions 1 to 22 are cleaved as a signal peptide; the sequence is MTKQLKLSALFVALLASGTAVA. Tandem repeats lie at residues 69 to 70, 71 to 72, 73 to 74, 75 to 76, 77 to 78, 79 to 80, and 81 to 82. Residues 69–82 are 7 X 2 AA tandem repeats of X-P; the sequence is APEPEPEPEPAPAP. The region spanning 92–229 is the OmpA-like domain; it reads YVDETISLSA…RVDVKIRSIV (138 aa). An intrachain disulfide couples Cys191 to Cys214.

Belongs to the outer membrane OOP (TC 1.B.6) superfamily. In terms of assembly, the C-terminus exists in a monomer-dimer equilibrium.

Its subcellular location is the cell outer membrane. The polypeptide is Outer membrane protein class 4 (Neisseria meningitidis serogroup B (strain ATCC BAA-335 / MC58)).